Consider the following 126-residue polypeptide: Large ribosomal subunit protein bL12 (126 aa).

It belongs to the bacterial ribosomal protein bL12 family. Homodimer. Part of the ribosomal stalk of the 50S ribosomal subunit. Forms a multimeric L10(L12)X complex, where L10 forms an elongated spine to which 2 to 4 L12 dimers bind in a sequential fashion. Binds GTP-bound translation factors.

Functionally, forms part of the ribosomal stalk which helps the ribosome interact with GTP-bound translation factors. Is thus essential for accurate translation. The protein is Large ribosomal subunit protein bL12 of Acidovorax sp. (strain JS42).